A 155-amino-acid polypeptide reads, in one-letter code: SsrA-binding protein (155 aa).

This sequence belongs to the SmpB family.

The protein localises to the cytoplasm. Required for rescue of stalled ribosomes mediated by trans-translation. Binds to transfer-messenger RNA (tmRNA), required for stable association of tmRNA with ribosomes. tmRNA and SmpB together mimic tRNA shape, replacing the anticodon stem-loop with SmpB. tmRNA is encoded by the ssrA gene; the 2 termini fold to resemble tRNA(Ala) and it encodes a 'tag peptide', a short internal open reading frame. During trans-translation Ala-aminoacylated tmRNA acts like a tRNA, entering the A-site of stalled ribosomes, displacing the stalled mRNA. The ribosome then switches to translate the ORF on the tmRNA; the nascent peptide is terminated with the 'tag peptide' encoded by the tmRNA and targeted for degradation. The ribosome is freed to recommence translation, which seems to be the essential function of trans-translation. This is SsrA-binding protein from Bacillus cytotoxicus (strain DSM 22905 / CIP 110041 / 391-98 / NVH 391-98).